A 218-amino-acid polypeptide reads, in one-letter code: Histidine biosynthesis bifunctional protein HisIE (218 aa).

A phosphoribosyl-AMP cyclohydrolase region spans residues 1-131 (MAPHQFKSKG…GDYDLPPADT (131 aa)). Residues 132-218 (LSQVFRVVEE…VYRALQQRRR (87 aa)) form a phosphoribosyl-ATP pyrophosphohydrolase region.

In the N-terminal section; belongs to the PRA-CH family. The protein in the C-terminal section; belongs to the PRA-PH family.

Its subcellular location is the cytoplasm. The catalysed reaction is 1-(5-phospho-beta-D-ribosyl)-ATP + H2O = 1-(5-phospho-beta-D-ribosyl)-5'-AMP + diphosphate + H(+). It carries out the reaction 1-(5-phospho-beta-D-ribosyl)-5'-AMP + H2O = 1-(5-phospho-beta-D-ribosyl)-5-[(5-phospho-beta-D-ribosylamino)methylideneamino]imidazole-4-carboxamide. The protein operates within amino-acid biosynthesis; L-histidine biosynthesis; L-histidine from 5-phospho-alpha-D-ribose 1-diphosphate: step 2/9. It participates in amino-acid biosynthesis; L-histidine biosynthesis; L-histidine from 5-phospho-alpha-D-ribose 1-diphosphate: step 3/9. The protein is Histidine biosynthesis bifunctional protein HisIE of Gloeobacter violaceus (strain ATCC 29082 / PCC 7421).